Consider the following 378-residue polypeptide: MSQQTTPAEQKSLQRKKPPFRADQVGSLLRSEPVKKARLQKAAGEMTAEQLRQIENDEIIRIVEKQKETGLNVVTDGEFRRAWWHFDFLENLDGVEPFTPEQGIQFHNVQTKARGIKVTGDIDFSTHPMLEDYSFLHSIAGDATPKMTIPSPNMLFFRGKLEKDEYKNDYQLFQHDVSKAYKKAIQAFYDRGCRYLQLDDTAWAVFLSEKGLKQIEAFGTTPDELRQLFAKSINDAIADRPDDLTVTMHICRGNFQSTWTAEGGYDAAAETIFDGLNLDGLFLEYDDSRSGGFEPLRYVKRSDLQLVLGLVTSKFGELENPDDVKRRIEEASRYVSLDQLCLSPQCGFASTEEGNKLTEEQQWAKLRHVVEIANDVWK.

Positions 1 to 11 are enriched in polar residues; sequence MSQQTTPAEQK. Residues 1–33 are disordered; sequence MSQQTTPAEQKSLQRKKPPFRADQVGSLLRSEP.

To B.subtilis YxjH.

This is an uncharacterized protein from Bacillus subtilis (strain 168).